A 123-amino-acid chain; its full sequence is Large ribosomal subunit protein bL20 (123 aa).

A compositionally biased stretch (basic residues) spans 1–15 (MARVKRSVNAKKKRR). The segment at 1–23 (MARVKRSVNAKKKRREVLDQASG) is disordered.

The protein belongs to the bacterial ribosomal protein bL20 family.

Functionally, binds directly to 23S ribosomal RNA and is necessary for the in vitro assembly process of the 50S ribosomal subunit. It is not involved in the protein synthesizing functions of that subunit. This chain is Large ribosomal subunit protein bL20, found in Cutibacterium acnes (strain DSM 16379 / KPA171202) (Propionibacterium acnes).